We begin with the raw amino-acid sequence, 462 residues long: Argininosuccinate lyase (462 aa).

This sequence belongs to the lyase 1 family. Argininosuccinate lyase subfamily.

It localises to the cytoplasm. It catalyses the reaction 2-(N(omega)-L-arginino)succinate = fumarate + L-arginine. The protein operates within amino-acid biosynthesis; L-arginine biosynthesis; L-arginine from L-ornithine and carbamoyl phosphate: step 3/3. The sequence is that of Argininosuccinate lyase from Dechloromonas aromatica (strain RCB).